The sequence spans 480 residues: Argininosuccinate lyase (480 aa).

This sequence belongs to the lyase 1 family. Argininosuccinate lyase subfamily.

It is found in the cytoplasm. It catalyses the reaction 2-(N(omega)-L-arginino)succinate = fumarate + L-arginine. It functions in the pathway amino-acid biosynthesis; L-arginine biosynthesis; L-arginine from L-ornithine and carbamoyl phosphate: step 3/3. The chain is Argininosuccinate lyase from Ruthia magnifica subsp. Calyptogena magnifica.